Consider the following 395-residue polypeptide: Digeranylgeranylglycerophospholipid reductase (395 aa).

Residues Ala-15, Asp-34, Cys-45, Ala-46, Gly-48, Arg-97, Ala-121, Asp-276, and Gly-288 each coordinate FAD. A 2,3-bis-O-(geranylgeranyl)-sn-glycerol 1-phospholipid is bound by residues Arg-329 and Gly-365.

This sequence belongs to the geranylgeranyl reductase family. DGGGPL reductase subfamily. FAD is required as a cofactor.

The catalysed reaction is a 2,3-bis-O-phytanyl-sn-glycerol 1-phospholipid + 8 A = a 2,3-bis-O-(geranylgeranyl)-sn-glycerol 1-phospholipid + 8 AH2. The enzyme catalyses 2,3-bis-O-(phytanyl)-sn-glycerol 1-phosphate + 8 A = 2,3-bis-O-(geranylgeranyl)-sn-glycerol 1-phosphate + 8 AH2. It carries out the reaction CDP-2,3-bis-O-(geranylgeranyl)-sn-glycerol + 8 AH2 = CDP-2,3-bis-O-(phytanyl)-sn-glycerol + 8 A. It catalyses the reaction archaetidylserine + 8 AH2 = 2,3-bis-O-phytanyl-sn-glycero-3-phospho-L-serine + 8 A. Its pathway is membrane lipid metabolism; glycerophospholipid metabolism. Its function is as follows. Is involved in the reduction of 2,3-digeranylgeranylglycerophospholipids (unsaturated archaeols) into 2,3-diphytanylglycerophospholipids (saturated archaeols) in the biosynthesis of archaeal membrane lipids. Catalyzes the formation of archaetidic acid (2,3-di-O-phytanyl-sn-glyceryl phosphate) from 2,3-di-O-geranylgeranylglyceryl phosphate (DGGGP) via the hydrogenation of each double bond of the isoprenoid chains. Is also probably able to reduce double bonds of geranyl groups in CDP-2,3-bis-O-(geranylgeranyl)-sn-glycerol and archaetidylserine, thus acting at various stages in the biosynthesis of archaeal membrane lipids. The sequence is that of Digeranylgeranylglycerophospholipid reductase from Thermococcus gammatolerans (strain DSM 15229 / JCM 11827 / EJ3).